The following is a 420-amino-acid chain: Riboflavin biosynthesis protein RibBA (420 aa).

Residues 1-202 form a DHBP synthase region; the sequence is MTTFGTIEQA…IADLVAYRRR (202 aa). D-ribulose 5-phosphate is bound by residues 28–29, aspartate 33, 141–145, and glutamate 165; these read RE and RPGHT. Glutamate 29 contributes to the Mg(2+) binding site. Mg(2+) is bound at residue histidine 144. Residues 203–420 form a GTP cyclohydrolase II region; that stretch reads TEKQVELVAE…RAVVGDGIGA (218 aa). A GTP-binding site is contributed by 253-257; it reads RVHSE. Cysteine 258, cysteine 269, and cysteine 271 together coordinate Zn(2+). Residues glutamine 274, 297 to 299, and threonine 319 contribute to the GTP site; that span reads EGR. Aspartate 331 functions as the Proton acceptor; for GTP cyclohydrolase activity in the catalytic mechanism. Arginine 333 serves as the catalytic Nucleophile; for GTP cyclohydrolase activity. Residues threonine 354 and lysine 359 each coordinate GTP.

In the N-terminal section; belongs to the DHBP synthase family. The protein in the C-terminal section; belongs to the GTP cyclohydrolase II family. Mg(2+) is required as a cofactor. The cofactor is Mn(2+). Zn(2+) serves as cofactor.

It carries out the reaction D-ribulose 5-phosphate = (2S)-2-hydroxy-3-oxobutyl phosphate + formate + H(+). It catalyses the reaction GTP + 4 H2O = 2,5-diamino-6-hydroxy-4-(5-phosphoribosylamino)-pyrimidine + formate + 2 phosphate + 3 H(+). It participates in cofactor biosynthesis; riboflavin biosynthesis; 2-hydroxy-3-oxobutyl phosphate from D-ribulose 5-phosphate: step 1/1. Its pathway is cofactor biosynthesis; riboflavin biosynthesis; 5-amino-6-(D-ribitylamino)uracil from GTP: step 1/4. Functionally, catalyzes the conversion of D-ribulose 5-phosphate to formate and 3,4-dihydroxy-2-butanone 4-phosphate. In terms of biological role, catalyzes the conversion of GTP to 2,5-diamino-6-ribosylamino-4(3H)-pyrimidinone 5'-phosphate (DARP), formate and pyrophosphate. The protein is Riboflavin biosynthesis protein RibBA of Salinispora arenicola (strain CNS-205).